A 374-amino-acid polypeptide reads, in one-letter code: Chaperone protein DnaJ (374 aa).

The 66-residue stretch at 4 to 69 (DFYETLCVSR…QKRAAYDRFG (66 aa)) folds into the J domain. The CR-type zinc finger occupies 131-210 (GKTAQIRVPT…CSGQGRLTEE (80 aa)). Zn(2+) contacts are provided by Cys-144, Cys-147, Cys-161, Cys-164, Cys-184, Cys-187, Cys-198, and Cys-201. 4 CXXCXGXG motif repeats span residues 144–151 (CDECAGSG), 161–168 (CPMCHGAG), 184–191 (CPQCQGRG), and 198–205 (CRKCSGQG).

It belongs to the DnaJ family. As to quaternary structure, homodimer. Zn(2+) serves as cofactor.

The protein localises to the cytoplasm. Its function is as follows. Participates actively in the response to hyperosmotic and heat shock by preventing the aggregation of stress-denatured proteins and by disaggregating proteins, also in an autonomous, DnaK-independent fashion. Unfolded proteins bind initially to DnaJ; upon interaction with the DnaJ-bound protein, DnaK hydrolyzes its bound ATP, resulting in the formation of a stable complex. GrpE releases ADP from DnaK; ATP binding to DnaK triggers the release of the substrate protein, thus completing the reaction cycle. Several rounds of ATP-dependent interactions between DnaJ, DnaK and GrpE are required for fully efficient folding. Also involved, together with DnaK and GrpE, in the DNA replication of plasmids through activation of initiation proteins. The chain is Chaperone protein DnaJ from Chelativorans sp. (strain BNC1).